The following is a 458-amino-acid chain: UDP-N-acetylmuramate--L-alanine ligase (458 aa).

Position 118-124 (118-124) interacts with ATP; the sequence is GTHGKTT.

Belongs to the MurCDEF family.

Its subcellular location is the cytoplasm. The enzyme catalyses UDP-N-acetyl-alpha-D-muramate + L-alanine + ATP = UDP-N-acetyl-alpha-D-muramoyl-L-alanine + ADP + phosphate + H(+). It participates in cell wall biogenesis; peptidoglycan biosynthesis. In terms of biological role, cell wall formation. This chain is UDP-N-acetylmuramate--L-alanine ligase, found in Clostridium botulinum (strain Kyoto / Type A2).